A 74-amino-acid polypeptide reads, in one-letter code: Class I heat shock protein (74 aa).

The disordered stretch occupies residues 1-20 (ILQISGERNVEKEDKNDTWH). The 74-residue stretch at 1–74 (ILQISGERNV…PDVKAIEISG (74 aa)) folds into the sHSP domain. Residues 8 to 20 (RNVEKEDKNDTWH) are compositionally biased toward basic and acidic residues.

It belongs to the small heat shock protein (HSP20) family. In terms of assembly, forms oligomeric structures.

The protein localises to the cytoplasm. This chain is Class I heat shock protein (HSP6834-A), found in Glycine max (Soybean).